Consider the following 404-residue polypeptide: XK-related protein 8 (404 aa).

8 helical membrane-spanning segments follow: residues 14–34, 44–64, 169–189, 209–229, 232–252, 262–282, 293–313, and 324–344; these read FVFSVIGACTFLVDWGSDVWL, VTWFWVLVGLMALSSFVVQTF, AVQFVSIAASTTSIAWMVVDY, LIYFLWNLLLIAPRVAALALC, VLSGYMAAHFLMLWSAFALWA, SVAGEWLYRATVGLIWYFSWF, SAIYHSFISTDGAILLATWWC, and ALALLIALPLFHFLGLLFKAL.

This sequence belongs to the XK family.

Its subcellular location is the cell membrane. It catalyses the reaction a 1,2-diacyl-sn-glycero-3-phospho-L-serine(in) = a 1,2-diacyl-sn-glycero-3-phospho-L-serine(out). Its function is as follows. Phospholipid scramblase that promotes phosphatidylserine exposure on apoptotic cell surface, possibly by mediating phospholipid scrambling. Phosphatidylserine is a specific marker only present at the surface of apoptotic cells and acts as a specific signal for engulfment. This chain is XK-related protein 8, found in Gasterosteus aculeatus (Three-spined stickleback).